The primary structure comprises 233 residues: Type IV secretion system protein PtlE homolog (233 aa).

A helical transmembrane segment spans residues 42–62; sequence VAWAALAVTALSLIAIATMLP.

The protein belongs to the virB8 family.

The protein resides in the cell inner membrane. In Bordetella bronchiseptica (strain ATCC BAA-588 / NCTC 13252 / RB50) (Alcaligenes bronchisepticus), this protein is Type IV secretion system protein PtlE homolog (ptlE).